An 84-amino-acid chain; its full sequence is MGFYMLLTVALLLTSFMSVEATPVDQAERSAMKESGLAHRIEPRYASCEAAEADCIHDDCFSEDTYTDVCQESCQYMYDNCMDD.

An N-terminal signal peptide occupies residues M1–A21. Positions T22–H39 are excised as a propeptide. 3 disulfides stabilise this stretch: C48–C70, C55–C74, and C60–C81.

In terms of tissue distribution, expressed by the venom duct.

Its subcellular location is the secreted. The protein is Turripeptide IX-01 of Gemmula speciosa (Splendid gem-turris).